A 243-amino-acid chain; its full sequence is Type III pantothenate kinase (243 aa).

An ATP-binding site is contributed by 6 to 13 (DIGNTVAK). Substrate is bound by residues Tyr-86 and 93–96 (GYDR). Asp-95 serves as the catalytic Proton acceptor. Asp-116 contributes to the K(+) binding site. Thr-119 contributes to the ATP binding site. Residue Thr-171 coordinates substrate.

This sequence belongs to the type III pantothenate kinase family. In terms of assembly, homodimer. Requires NH4(+) as cofactor. The cofactor is K(+).

Its subcellular location is the cytoplasm. The enzyme catalyses (R)-pantothenate + ATP = (R)-4'-phosphopantothenate + ADP + H(+). Its pathway is cofactor biosynthesis; coenzyme A biosynthesis; CoA from (R)-pantothenate: step 1/5. In terms of biological role, catalyzes the phosphorylation of pantothenate (Pan), the first step in CoA biosynthesis. This is Type III pantothenate kinase from Bacteroides fragilis (strain YCH46).